A 299-amino-acid chain; its full sequence is Glycine--tRNA ligase alpha subunit (299 aa).

The protein belongs to the class-II aminoacyl-tRNA synthetase family. In terms of assembly, tetramer of two alpha and two beta subunits.

It is found in the cytoplasm. It catalyses the reaction tRNA(Gly) + glycine + ATP = glycyl-tRNA(Gly) + AMP + diphosphate. The sequence is that of Glycine--tRNA ligase alpha subunit from Lactiplantibacillus plantarum (strain ATCC BAA-793 / NCIMB 8826 / WCFS1) (Lactobacillus plantarum).